A 191-amino-acid polypeptide reads, in one-letter code: Leucyl/phenylalanyl-tRNA--protein transferase (191 aa).

This sequence belongs to the L/F-transferase family.

It is found in the cytoplasm. It carries out the reaction N-terminal L-lysyl-[protein] + L-leucyl-tRNA(Leu) = N-terminal L-leucyl-L-lysyl-[protein] + tRNA(Leu) + H(+). The enzyme catalyses N-terminal L-arginyl-[protein] + L-leucyl-tRNA(Leu) = N-terminal L-leucyl-L-arginyl-[protein] + tRNA(Leu) + H(+). The catalysed reaction is L-phenylalanyl-tRNA(Phe) + an N-terminal L-alpha-aminoacyl-[protein] = an N-terminal L-phenylalanyl-L-alpha-aminoacyl-[protein] + tRNA(Phe). Functions in the N-end rule pathway of protein degradation where it conjugates Leu, Phe and, less efficiently, Met from aminoacyl-tRNAs to the N-termini of proteins containing an N-terminal arginine or lysine. The chain is Leucyl/phenylalanyl-tRNA--protein transferase from Rubrobacter xylanophilus (strain DSM 9941 / JCM 11954 / NBRC 16129 / PRD-1).